We begin with the raw amino-acid sequence, 492 residues long: Falcipain-3 (492 aa).

Topologically, residues 1-35 (MEYHMEYSPNEVIKQEREVFVGKEKSGSKFKRKRS) are cytoplasmic. Residues 1-242 (MEYHMEYSPN…LNLKTHGPFK (242 aa)) constitute a propeptide, activation peptide. The Bipartite vacuolar targeting signal 1 signature appears at 16–25 (EREVFVGKEK). The chain crosses the membrane as a helical; Signal-anchor for type II membrane protein span at residues 36 to 56 (IFIVLTVSICFMFALMLFYFT). Topologically, residues 57–492 (RNENNKTLFT…GTEAYVPLLE (436 aa)) are lumenal. N61 carries an N-linked (GlcNAc...) asparagine glycan. Positions 84 to 105 (KSESGKKFIVSKLEELISSYDK) match the Bipartite vacuolar targeting signal 2 motif. The N-linked (GlcNAc...) asparagine glycan is linked to N129. A Nose motif; required for the correct folding of the mature form motif is present at residues 251 to 268 (EANYEDVIKKYKPADAKL). 4 disulfides stabilise this stretch: C290–C331, C324–C365, C350–C370, and C419–C480. C293 is a catalytic residue. H425 is an active-site residue. Residues 436–445 (DIYNEDTGRM) carry the Arm motif; binds to host hemoglobin and required for the inhibitory interaction between the propeptide and the catalytic domain motif. Residue N455 is part of the active site.

This sequence belongs to the peptidase C1 family. Auto-cleavage occurs at acidic pH. The proenzyme is the predominant form in late trophozoites and both the pro and mature enzyme are present in schizonts.

Its subcellular location is the membrane. The protein resides in the vacuole. The protein localises to the cytoplasmic vesicle membrane. Inhibited by cysteine protease inhibitor ICP. Functionally, cysteine protease which cleaves native host hemoglobin and globin in the food vacuole during the asexual blood stage. Preferentially cleaves substrates which have an arginine at the P1 position and a leucine at the P2 position. This Plasmodium falciparum (isolate 3D7) protein is Falcipain-3.